The primary structure comprises 165 residues: Protein SEED AND ROOT HAIR PROTECTIVE PROTEIN (165 aa).

The N-terminal stretch at 1-24 (MAFSRLSFAASLIVFSSLIISSVA) is a signal peptide.

It belongs to the plant proline-rich protein superfamily. In terms of tissue distribution, root hair and seed specific expression. Also observed in other tissues including siliques, roots and flowers.

It localises to the secreted. The protein resides in the cell wall. In terms of biological role, contributes to cell wall structure in root hairs and seeds, especially in phosphate (Pi) deprivation conditions or in the presence of ethylene. Particularly important in maternal tissues (pericarps and seed coats) during seed development, especially under stress conditions. Confers thermotolerance in seed germination rate. This is Protein SEED AND ROOT HAIR PROTECTIVE PROTEIN from Arabidopsis thaliana (Mouse-ear cress).